The sequence spans 348 residues: WW domain binding protein 1-like (348 aa).

Residues Leu42–His62 form a helical membrane-spanning segment. Disordered stretches follow at residues Val111–Thr253 and Cys306–Ser348. Pro residues predominate over residues Leu134–Gln155. Low complexity predominate over residues Gly156–Ser177. Residue Ser177 is modified to Phosphoserine. Residues Ser220–Arg234 show a composition bias toward basic and acidic residues. Positions Asn331–Ser348 are enriched in polar residues.

The protein localises to the membrane. This Mus musculus (Mouse) protein is WW domain binding protein 1-like (Wbp1l).